Here is a 268-residue protein sequence, read N- to C-terminus: Interferon alpha/beta receptor 2 (268 aa).

Residues 1–16 form the signal peptide; it reads MGPWTLLLLHLPLVVS. The Extracellular segment spans residues 17–223; sequence MLPAPTNVSI…TSPTAANTVP (207 aa). Fibronectin type-III domains are found at residues 18 to 114 and 115 to 217; these read LPAP…LTDT and LLGP…TSPT. 2 disulfide bridges follow: C65–C74 and C191–C211. The helical transmembrane segment at 224–244 threads the bilayer; it reads VVLSVLCAFSLLVVLLCGIVV. At 245–268 the chain is on the cytoplasmic side; the sequence is YSGRLLCMHKPLPKTLSSVPLCGG.

Belongs to the type II cytokine receptor family. In terms of assembly, heterodimer with IFNAR1; forming the receptor for type I interferon.

The protein resides in the cell membrane. It is found in the cytoplasm. Together with IFNAR1, forms the heterodimeric receptor for type I interferons (including interferons alpha, beta, epsilon, omega and kappa). Type I interferon binding activates the JAK-STAT signaling cascade, resulting in transcriptional activation or repression of interferon-regulated genes that encode the effectors of the interferon response. Mechanistically, type I interferon-binding brings the IFNAR1 and IFNAR2 subunits into close proximity with one another, driving their associated Janus kinases (JAKs) (TYK2 bound to IFNAR1 and JAK1 bound to IFNAR2) to cross-phosphorylate one another. The activated kinases phosphorylate specific tyrosine residues on the intracellular domains of IFNAR1 and IFNAR2, forming docking sites for the STAT transcription factors (STAT1, STAT2 and STAT). STAT proteins are then phosphorylated by the JAKs, promoting their translocation into the nucleus to regulate expression of interferon-regulated genes. The chain is Interferon alpha/beta receptor 2 from Oncorhynchus mykiss (Rainbow trout).